The sequence spans 94 residues: uncharacterized protein (94 aa).

Residues 33-42 (INSLPTFTKP) are compositionally biased toward polar residues. Residues 33 to 57 (INSLPTFTKPNDSNNNVNKSSNDGV) are disordered. Residues 43–57 (NDSNNNVNKSSNDGV) show a composition bias toward low complexity.

This is an uncharacterized protein from Dictyostelium discoideum (Social amoeba).